We begin with the raw amino-acid sequence, 110 residues long: Mite allergen Lep d 5 (110 aa).

It belongs to the mite group 5 allergen family.

The chain is Mite allergen Lep d 5 from Lepidoglyphus destructor (Storage mite).